A 288-amino-acid polypeptide reads, in one-letter code: Zinc finger protein ZAT9 (288 aa).

The C2H2-type 1 zinc-finger motif lies at 4–26 (YKCRVCFKSFVNGKALGGHMRSH). Disordered stretches follow at residues 20-82 (GGHM…LTRK), 101-123 (SQLG…DTTT), and 189-210 (GGHR…QRSE). A compositionally biased stretch (polar residues) spans 37–52 (PSQLSYETESDVSSSD). 2 C2H2-type zinc fingers span residues 173-195 (YKCE…RASH) and 224-246 (HECP…KRSH).

It is found in the nucleus. Functionally, probable transcription factor that may be involved in stress responses. This Arabidopsis thaliana (Mouse-ear cress) protein is Zinc finger protein ZAT9 (ZAT9).